The primary structure comprises 882 residues: Bifunctional heparan sulfate N-deacetylase/N-sulfotransferase 1 (882 aa).

The Cytoplasmic portion of the chain corresponds to 1 to 17 (MPALACLRRLCRHVSPQ). The segment at 1–169 (MPALACLRRL…VAYGVGIIGF (169 aa)) is sufficient for localization to Golgi membrane. Residues 18 to 39 (AVLFLLFIFCLFSVFISAYYLY) traverse the membrane as a helical; Signal-anchor for type II membrane protein segment. Residues 40 to 598 (GWKRGLEPSA…KRHKDIWSKE (559 aa)) are heparan sulfate N-deacetylase 1. Over 40–882 (GWKRGLEPSA…WLREDLQNTR (843 aa)) the chain is Lumenal. 3 N-linked (GlcNAc...) asparagine glycosylation sites follow: Asn-231, Asn-351, and Asn-401. The tract at residues 599 to 882 (KTCDRFPKLL…WLREDLQNTR (284 aa)) is heparan sulfate N-sulfotransferase 1. The active-site For sulfotransferase activity is the Lys-614. 614–618 (KTGTT) serves as a coordination point for adenosine 3',5'-bisphosphate. An N-linked (GlcNAc...) asparagine glycan is attached at Asn-667. 2 residues coordinate adenosine 3',5'-bisphosphate: Ser-712 and Trp-817. A disulfide bridge connects residues Cys-818 and Cys-828. 833–837 (KGRKY) is a binding site for adenosine 3',5'-bisphosphate.

Belongs to the sulfotransferase 1 family. NDST subfamily. In terms of assembly, monomer. Interacts with heparan sulfate co-polymerase subunits EXT1 and EXT2. Interacts with NDST1 isoform 3. As to quaternary structure, interacts with heparan sulfate co-polymerase subunits EXT1 and EXT2. Interacts with NDST1 isoform 1. In terms of tissue distribution, widely expressed. Expression is most abundant in heart, liver and pancreas.

The protein resides in the golgi apparatus. Its subcellular location is the trans-Golgi network membrane. The protein localises to the cis-Golgi network membrane. The catalysed reaction is N-acetyl-alpha-D-glucosaminyl-[heparan sulfate](n) + H2O = alpha-D-glucosaminyl-[heparan sulfate](n) + acetate. It catalyses the reaction alpha-D-glucosaminyl-[heparan sulfate](n) + 3'-phosphoadenylyl sulfate = N-sulfo-alpha-D-glucosaminyl-[heparan sulfate](n) + adenosine 3',5'-bisphosphate + 2 H(+). It participates in glycan metabolism; heparan sulfate biosynthesis. It functions in the pathway glycan metabolism; heparin biosynthesis. Functionally, essential bifunctional enzyme that catalyzes both the N-deacetylation and the N-sulfation of glucosamine (GlcNAc) of the glycosaminoglycan in heparan sulfate. Modifies the GlcNAc-GlcA disaccharide repeating sugar backbone to make N-sulfated heparosan, a prerequisite substrate for later modifications in heparin biosynthesis. Plays a role in determining the extent and pattern of sulfation of heparan sulfate. Participates in biosynthesis of heparan sulfate that can ultimately serve as L-selectin ligands, thereby playing a role in inflammatory response. Required for the exosomal release of SDCBP, CD63 and syndecan. Its function is as follows. Lacks both N-deacetylase and N-sulfotransferase activities. Acts as a dominant negative on isoform 1, likely by changing the composition of enzyme complexes responsible for elongation and modification of heparan sulfates. The chain is Bifunctional heparan sulfate N-deacetylase/N-sulfotransferase 1 from Homo sapiens (Human).